Consider the following 494-residue polypeptide: Neuronal acetylcholine receptor subunit alpha-6 (494 aa).

An N-terminal signal peptide occupies residues 1–30 (MLNSRDQGNLHSGLCLWLCGFLALFKGSTG). Residues 31-240 (CESEEQLFHR…TYSFYIRRLP (210 aa)) lie on the Extracellular side of the membrane. 2 N-linked (GlcNAc...) asparagine glycosylation sites follow: Asn-54 and Asn-171. Intrachain disulfides connect Cys-158–Cys-172 and Cys-222–Cys-223. The next 3 membrane-spanning stretches (helical) occupy residues 241-265 (MFYT…FYLP), 272-290 (VTLC…LVIT), and 306-327 (YLLF…VLNI). At 328–465 (HYRTPATHTM…WKYMAMVVDR (138 aa)) the chain is on the cytoplasmic side. Positions 399–423 (QKSSDIAPGKRRSSQQPARWVAENS) are disordered. Position 401 is a phosphoserine (Ser-401). The helical transmembrane segment at 466–485 (VFLWVFIIVCVFGTVGLFLQ) threads the bilayer.

Belongs to the ligand-gated ion channel (TC 1.A.9) family. Acetylcholine receptor (TC 1.A.9.1) subfamily. Alpha-6/CHRNA6 sub-subfamily. In terms of assembly, neuronal AChR is composed of two different types of subunits: alpha and non-alpha (beta). CHRNA6/alpha-6 subunit can be combined to CHRNB2/beta-2 and CHRNA4/alpha-4 to give rise to functional receptors. Interacts with LYPD6. As to expression, predominantly expressed in only a few brain areas, including dopaminergic neurons, norepirephrine neurons and cells of the visual system.

The protein resides in the synaptic cell membrane. It catalyses the reaction K(+)(in) = K(+)(out). The enzyme catalyses Na(+)(in) = Na(+)(out). The catalysed reaction is Ca(2+)(in) = Ca(2+)(out). With respect to regulation, activated by a myriad of ligands such as acetylcholine, cytisine and nicotine. CHRNA6 nAChR activity is inhibited by the antagonists alpha-conotoxin MII and PIA, a small disulfide-constrained peptides from cone snails. Its function is as follows. Component of neuronal acetylcholine receptors (nAChRs) that function as pentameric, ligand-gated cation channels with high calcium permeability among other activities. nAChRs are excitatory neurotrasnmitter receptors formed by a collection of nAChR subunits known to mediate synaptic transmission in the nervous system and the neuromuscular junction. Each nAchR subunit confers differential attributes to channel properties, including activation, deactivation and desensitization kinetics, pH sensitivity, cation permeability, and binding to allosteric modulators. CHRNA6 forms pentameric channels with CHRNB2 and CHRNA4 that exhibit high sensitivity to ACh and nicotine and are predominantly expressed in only a few brain areas, including dopaminergic neurons, norepirephrine neurons and cells of the visual system. nAChrs containing CHRNA6 subunits mediate endogenous cholinergic modulation of dopamine and gamma-aminobutyric acid (GABA) release in response to nicotine at nerve terminals. The protein is Neuronal acetylcholine receptor subunit alpha-6 (Chrna6) of Mus musculus (Mouse).